We begin with the raw amino-acid sequence, 942 residues long: Eukaryotic translation initiation factor 3 subunit A (942 aa).

Positions 320-494 (FKKYSSIILL…NTVTFFKDPF (175 aa)) constitute a PCI domain. Coiled coils occupy residues 499–529 (KAAGTVEEEEEEEEEEGEEVEGEEAETGEEI), 588–669 (ITQT…KQRE), 705–734 (SKLSQDKSELEDRMTSSLQKLDHAERAYRK), and 821–912 (IEEV…RKAQ). The disordered stretch occupies residues 502 to 546 (GTVEEEEEEEEEEGEEVEGEEAETGEEIVEEGEEHENEENKEPEP). The span at 504 to 538 (VEEEEEEEEEEGEEVEGEEAETGEEIVEEGEEHEN) shows a compositional bias: acidic residues. Composition is skewed to basic and acidic residues over residues 836–870 (RKAEIEAEEREERAKKQEETARKQKEMEEAAERKS) and 889–911 (RSAKLDEIARRQREIEQAAERKA). Positions 836–942 (RKAEIEAEER…KMKLRRASKK (107 aa)) are disordered.

This sequence belongs to the eIF-3 subunit A family. As to quaternary structure, component of the eukaryotic translation initiation factor 3 (eIF-3) complex.

Its subcellular location is the cytoplasm. Its function is as follows. RNA-binding component of the eukaryotic translation initiation factor 3 (eIF-3) complex, which is involved in protein synthesis of a specialized repertoire of mRNAs and, together with other initiation factors, stimulates binding of mRNA and methionyl-tRNAi to the 40S ribosome. The eIF-3 complex specifically targets and initiates translation of a subset of mRNAs involved in cell proliferation. The protein is Eukaryotic translation initiation factor 3 subunit A of Vanderwaltozyma polyspora (strain ATCC 22028 / DSM 70294 / BCRC 21397 / CBS 2163 / NBRC 10782 / NRRL Y-8283 / UCD 57-17) (Kluyveromyces polysporus).